Consider the following 618-residue polypeptide: Glucose starvation modulator protein 1 (618 aa).

Positions 20–48 form a DNA-binding region, zn(2)-C6 fungal-type; the sequence is CEFCHTKHIQCDVGRPCQNCLKRNIGKFC. Residues 325–352 form a disordered region; it reads ANANTHPSHNAKLESECDSSSHSDADLE. Residues 335–352 are compositionally biased toward basic and acidic residues; that stretch reads AKLESECDSSSHSDADLE. The PAS domain maps to 466-538; sequence LLDLENMAKL…QIFNELLAFG (73 aa).

This sequence belongs to the ERT1/acuK family.

The protein resides in the nucleus. Its function is as follows. Transcription factor which regulates nonfermentable carbon utilization. Binds specifically to 5'-CGGN(8)CGG-3' and 5'-CGGN(9)CGG-3' sequences in the promoter region. The polypeptide is Glucose starvation modulator protein 1 (GSM1) (Saccharomyces cerevisiae (strain RM11-1a) (Baker's yeast)).